The sequence spans 734 residues: Photosystem I P700 chlorophyll a apoprotein A2 (734 aa).

Transmembrane regions (helical) follow at residues 46 to 69 (IFAS…FHVA), 135 to 158 (LYTG…LHLQ), 175 to 199 (LNHH…HVAI), 273 to 291 (IAHH…GHMY), 330 to 353 (IHFQ…QHMY), 369 to 395 (AALY…IFFI), 417 to 439 (AIIS…LYVH), and 517 to 535 (FLVH…LILV). [4Fe-4S] cluster is bound by residues Cys559 and Cys568. 2 consecutive transmembrane segments (helical) span residues 575–596 (AFYL…YWHW) and 643–665 (LSVW…MFLI). The chlorophyll a site is built by His654, Met662, and Tyr670. Residue Trp671 participates in phylloquinone binding. The helical transmembrane segment at 707-727 (LVGLAHFSVGYIFTYAAFLIA) threads the bilayer.

Belongs to the PsaA/PsaB family. In terms of assembly, the PsaA/B heterodimer binds the P700 chlorophyll special pair and subsequent electron acceptors. PSI consists of a core antenna complex that captures photons, and an electron transfer chain that converts photonic excitation into a charge separation. The eukaryotic PSI reaction center is composed of at least 11 subunits. It depends on P700 is a chlorophyll a/chlorophyll a' dimer, A0 is one or more chlorophyll a, A1 is one or both phylloquinones and FX is a shared 4Fe-4S iron-sulfur center. as a cofactor.

The protein localises to the plastid. The protein resides in the chloroplast thylakoid membrane. The catalysed reaction is reduced [plastocyanin] + hnu + oxidized [2Fe-2S]-[ferredoxin] = oxidized [plastocyanin] + reduced [2Fe-2S]-[ferredoxin]. PsaA and PsaB bind P700, the primary electron donor of photosystem I (PSI), as well as the electron acceptors A0, A1 and FX. PSI is a plastocyanin-ferredoxin oxidoreductase, converting photonic excitation into a charge separation, which transfers an electron from the donor P700 chlorophyll pair to the spectroscopically characterized acceptors A0, A1, FX, FA and FB in turn. Oxidized P700 is reduced on the lumenal side of the thylakoid membrane by plastocyanin. This is Photosystem I P700 chlorophyll a apoprotein A2 from Saccharum hybrid (Sugarcane).